A 161-amino-acid chain; its full sequence is FAD synthase (161 aa).

ATP-binding positions include 19-20 (TF), 24-27 (HPGH), Asp-106, and Tyr-133.

This sequence belongs to the archaeal FAD synthase family. Homodimer. A divalent metal cation serves as cofactor.

The catalysed reaction is FMN + ATP + H(+) = FAD + diphosphate. It functions in the pathway cofactor biosynthesis; FAD biosynthesis; FAD from FMN: step 1/1. Catalyzes the transfer of the AMP portion of ATP to flavin mononucleotide (FMN) to produce flavin adenine dinucleotide (FAD) coenzyme. The protein is FAD synthase of Methanothermobacter marburgensis (strain ATCC BAA-927 / DSM 2133 / JCM 14651 / NBRC 100331 / OCM 82 / Marburg) (Methanobacterium thermoautotrophicum).